The primary structure comprises 522 residues: Type-2 serine--tRNA ligase (522 aa).

Residue alanine 319 coordinates L-serine. Zn(2+) is bound at residue cysteine 321. Arginine 350 contributes to the L-serine binding site. ATP-binding positions include 350–352 (RWE) and 361–362 (RV). L-serine is bound at residue 367-369 (RIE). The Zn(2+) site is built by glutamate 369 and cysteine 476. Arginine 483 is a binding site for ATP.

It belongs to the class-II aminoacyl-tRNA synthetase family. Type-2 seryl-tRNA synthetase subfamily. As to quaternary structure, homodimer. Zn(2+) is required as a cofactor.

Its subcellular location is the cytoplasm. It carries out the reaction tRNA(Ser) + L-serine + ATP = L-seryl-tRNA(Ser) + AMP + diphosphate + H(+). The catalysed reaction is tRNA(Sec) + L-serine + ATP = L-seryl-tRNA(Sec) + AMP + diphosphate + H(+). The protein operates within aminoacyl-tRNA biosynthesis; selenocysteinyl-tRNA(Sec) biosynthesis; L-seryl-tRNA(Sec) from L-serine and tRNA(Sec): step 1/1. In terms of biological role, catalyzes the attachment of serine to tRNA(Ser). Is also able to aminoacylate tRNA(Sec) with serine, to form the misacylated tRNA L-seryl-tRNA(Sec), which will be further converted into selenocysteinyl-tRNA(Sec). This chain is Type-2 serine--tRNA ligase (serS), found in Methanococcus aeolicus (strain ATCC BAA-1280 / DSM 17508 / OCM 812 / Nankai-3).